The chain runs to 33 residues: Alpha-amanitin proprotein (33 aa).

The propeptide occupies 1-10 (MSDINATRLP). A (3R,4R)-4,5-dihydroxyisoleucine; in form alpha-amanitin modification is found at Ile11. At Ile11 the chain carries (3R,4S)-4-hydroxyisoleucine; in form gamma-amanitin. A cross-link (cyclopeptide (Ile-Pro)) is located at residues 11–18 (IWGIGCNP). A cross-link (2'-cysteinyl-6'-hydroxytryptophan sulfoxide (Trp-Cys)) is located at residues 12-16 (WGIGC). Pro18 is subject to 4-hydroxyproline. The propeptide occupies 19–33 (SVGDEVTALLASGEA).

The protein belongs to the MSDIN fungal toxin family. In terms of processing, processed by the macrocyclase-peptidase enzyme POPB to yield a toxic cyclic decapeptide. POPB first removes 10 residues from the N-terminus. Conformational trapping of the remaining peptide forces the enzyme to release this intermediate rather than proceed to macrocyclization. The enzyme rebinds the remaining peptide in a different conformation and catalyzes macrocyclization of the N-terminal 8 residues.

In terms of biological role, major toxin belonging to the bicyclic octapeptides amatoxins that acts by binding non-competitively to RNA polymerase II and greatly slowing the elongation of transcripts from target promoters. The chain is Alpha-amanitin proprotein from Amanita rimosa.